Here is a 513-residue protein sequence, read N- to C-terminus: Xyloglucan 6-xylosyltransferase 4 (513 aa).

At 1–39 the chain is on the cytoplasmic side; that stretch reads MFQDGSRSSGSGRGLSTTAVSNGGWRTRGFLRGWQIQNT. A helical; Signal-anchor for type II membrane protein membrane pass occupies residues 40 to 60; the sequence is LFNNIKFMILCCFVTILILLG. Over 61–513 the chain is Lumenal; the sequence is TIRVGNLGSS…IRRMHMETKP (453 aa). Asn-76, Asn-110, Asn-142, Asn-174, and Asn-490 each carry an N-linked (GlcNAc...) asparagine glycan.

Belongs to the glycosyltransferase 34 family.

Its subcellular location is the golgi apparatus membrane. The enzyme catalyses Transfers an alpha-D-xylosyl residue from UDP-D-xylose to a glucose residue in xyloglucan, forming an alpha-(1-&gt;6)-D-xylosyl-D-glucose linkage.. Functionally, xylosyltransferase specific to UDP-D-xylose that accepts cellohexaose as substrate to produce xyloglucan. This is Xyloglucan 6-xylosyltransferase 4 from Arabidopsis thaliana (Mouse-ear cress).